A 204-amino-acid polypeptide reads, in one-letter code: Small ribosomal subunit protein uS4 (204 aa).

Residues 21 to 45 (GRPKSPINKREYGPGQHGQRRKKPS) are disordered. The S4 RNA-binding domain maps to 93–156 (RRLDAVVYRM…KQLAMVLDSV (64 aa)).

Belongs to the universal ribosomal protein uS4 family. As to quaternary structure, part of the 30S ribosomal subunit. Contacts protein S5. The interaction surface between S4 and S5 is involved in control of translational fidelity.

Its function is as follows. One of the primary rRNA binding proteins, it binds directly to 16S rRNA where it nucleates assembly of the body of the 30S subunit. With S5 and S12 plays an important role in translational accuracy. This Acidiphilium cryptum (strain JF-5) protein is Small ribosomal subunit protein uS4.